Consider the following 1048-residue polypeptide: MDITELLQCFACTLDHNAAVRTNAETHLKNASKVPGFLGACLDIIAADEVPENIKLSASLYFKNKITYGWSAGARQGSNELLDSHVDPDEKPVVKDMLIKTMVSVSKTSPRCIRVLKSALTVIISEDYPSKKWGNLLPNSLELLANEDITVTYVGLLCLAEIFRTYRWKNNDERQDLEELILNYFPALLNYGANVLFQDGKYMNNEQIGELVKLIIKIYKFVSYHDLPFTLQRSESFTPWACFFVSIIQQPLPQEVLAISDIEVRSKNPWVKCKKWALANLYRLFQRYASTSLTRKFQYDEFKQMYCEEFLTQFLQVVFDQIEKWGTGQLWLSDECLYYILNFVEQCVVQKTTWKLVGPHYNVILQHVIFPLLKPTAETLEAFDNDPQEYINRNMDFWDVGYSPDLAALALLTTCVTKRGKTTLQPTLEFMVSTLQSAVGDYNNIMLDNALQIESCLRIFSSIIDRLITKDSPFASEMEKFILTYVLPFFKSQYGFLQSRVCDICSKLGSMDFKDPVITSTIYEGVMNCLNNSSNSLPVELTAALALQTFISDDQFNMKLSEHVVPTMQKLLSLSNDFESDVISGVMQDFVEQFAEQLQPFGVELMNTLVQQFLKLAIDLHETSNLDPDSFTNVDSIPDESDKQMAALGILSTTISILLSFENSPEILKNLEQSFYPAAEFILKNDIEDFYRECCEFVENSTFLLRDITPISWKILELIGECNRKPDSMVSYYLSDFMLALNNILIYGRNELKKNEFYTKIIFEIYQKAVTAEDNSLDDLRVVFDLSQELVLALDDSLPQQYRERLLADVVGSILTQKNELKTNVVFSVTAFNVVISNMITEPLITLQYLKQQGCLEIFFQTWITDYIPNYKRCYDIKLSVLALLKIILKLESNDYSVLNLENLVPQLGSIVTQLASRLPTALRQLANQRKEFSSSGFEEDTKWDENFLDVGDDDENDDEGDLTEKYLELIKNRADSLDFVDGYDAKETFDDLEEDPLTGSILDTVDVYKVFKESIANLQHVDSNRYQGILRHLTPADQELFMGIMNA.

Residues 24–104 (AETHLKNASK…KDMLIKTMVS (81 aa)) enclose the Importin N-terminal domain. S977 carries the phosphoserine modification.

As to quaternary structure, GTP-bound Ran dissociates the isolated NMD5/TFIIS complex.

Its subcellular location is the nucleus. The protein resides in the cytoplasm. In terms of biological role, active in protein import into the nucleus. Its major import substrate is transcription elongation factor TFIIS. The protein is Nonsense-mediated mRNA decay protein 5 (NMD5) of Saccharomyces cerevisiae (strain ATCC 204508 / S288c) (Baker's yeast).